We begin with the raw amino-acid sequence, 977 residues long: Serine/threonine-protein kinase/endoribonuclease IRE1 (977 aa).

The signal sequence occupies residues 1 to 20 (MPARWLLLLLALLLPPPGPG). At 21–445 (SFGRTSTVTL…EAPVDSMLKD (425 aa)) the chain is on the lumenal side. N-linked (GlcNAc...) asparagine glycosylation occurs at Asn-178. The helical transmembrane segment at 446–466 (MATIILSTFLLVGWVAFIITY) threads the bilayer. Over 467 to 977 (PLSVHQQRQL…PQPPVIPYAL (511 aa)) the chain is Cytoplasmic. The segment at 498 to 559 (FHPHGDLTQD…PSLEQDDEDE (62 aa)) is disordered. A compositionally biased stretch (low complexity) spans 513 to 551 (SSGPFSESSGTSSPSPSPRASNHSLHPSSSASRAGTSPS). The Protein kinase domain maps to 571 to 832 (FCPKDVLGHG…AKHVLKHPFF (262 aa)). ATP is bound by residues 577-585 (LGHGAEGTI), Lys-599, and 643-645 (ELC). The active-site Proton acceptor; for protein kinase activity is Asp-688. Residues 690-693 (KPHN) and Asp-711 each bind ATP. Residues Ser-724 and Ser-729 each carry the phosphoserine modification. The KEN domain occupies 835–963 (LEKQLQFFQD…ERLFQTYYWH (129 aa)). Positions 906–907 (NK) are interacts with hydroxy-aryl-aldehyde inhibitors.

It belongs to the protein kinase superfamily. Ser/Thr protein kinase family. As to quaternary structure, monomer. Homodimer; disulfide-linked; homodimerization takes place in response to endoplasmic reticulum stress and promotes activation of the kinase and endoribonuclease activities. Dimer formation is driven by hydrophobic interactions within the N-terminal luminal domains and stabilized by disulfide bridges. Interacts (via the luminal region) with DNAJB9/ERdj4; interaction takes place in unstressed cells and promotes recruitment of HSPA5/BiP. Interacts (via the luminal region) with HSPA5/BiP; HSPA5/BiP is a negative regulator of the unfolded protein response (UPR) that prevents homodimerization of ERN1/IRE1 and subsequent activation of the protein. Interaction with HSPA5 also competitively inhibits ERN1 interaction with MANF. Interacts with PDIA6, a negative regulator of the UPR; the interaction is direct and disrupts homodimerization. Interacts with DAB2IP (via PH domain); the interaction occurs in a endoplasmic reticulum stress-induced dependent manner and is required for subsequent recruitment of TRAF2 to ERN1/IRE1. Interacts with TAOK3 and TRAF2. Interacts with RNF13. Interacts with LACC1. Interacts (when unphosphorylated) with DDRGK1; interaction is dependent on UFM1 and takes place in response to endoplasmic reticulum stress, regulating ERN1/IRE1-alpha stability. Interacts (via N-terminus) with P4HB/PDIA1; the interaction is enhanced by phosphorylation of P4HB by FAM20C in response to endoplasmic reticulum stress and results in attenuation of ERN1 activity. Interacts with TMBIM6; this interaction inhibits ERN1 activity. Interacts (via luminal domain) with MANF (via C-terminus); the interaction is decreased in the presence of increasing concentrations of Ca(2+). It depends on Mg(2+) as a cofactor. Post-translationally, autophosphorylated following homodimerization. Autophosphorylation promotes activation of the endoribonuclease domain. In response to ER stress, phosphorylated at Ser-724, Ser-729 and possibly Ser-726; phosphorylation promotes oligomerization and endoribonuclease activity. Dephosphorylated at Ser-724, Ser-729 and possibly Ser-726 by RPAP2 to abort failed ER-stress adaptation and trigger apoptosis. Phosphorylated at Ser-724; in response to the ER stressor tunicamycin. ADP-ribosylated by PARP16 upon ER stress, which increases both kinase and endonuclease activities. In terms of tissue distribution, expressed in liver (at protein level). Ubiquitously expressed. High levels in thymus, liver and lung. In the brain, preferentially expressed in cortical, hippocampal and olfactory neurons.

The protein resides in the endoplasmic reticulum membrane. The enzyme catalyses L-seryl-[protein] + ATP = O-phospho-L-seryl-[protein] + ADP + H(+). It catalyses the reaction L-threonyl-[protein] + ATP = O-phospho-L-threonyl-[protein] + ADP + H(+). With respect to regulation, the kinase domain is activated by trans-autophosphorylation following homodimerization. Kinase activity is required for activation of the endoribonuclease domain. Endoribonuclease activity is specifically inhibited by hydroxy-aryl-aldehydes (HAA) MKC9989, OICR464 and OICR573. In terms of biological role, serine/threonine-protein kinase and endoribonuclease that acts as a key sensor for the endoplasmic reticulum unfolded protein response (UPR). In unstressed cells, the endoplasmic reticulum luminal domain is maintained in its inactive monomeric state by binding to the endoplasmic reticulum chaperone HSPA5/BiP. Accumulation of misfolded protein in the endoplasmic reticulum causes release of HSPA5/BiP, allowing the luminal domain to homodimerize, promoting autophosphorylation of the kinase domain and subsequent activation of the endoribonuclease activity. The endoribonuclease activity is specific for XBP1 mRNA and excises 26 nucleotides from XBP1 mRNA. The resulting spliced transcript of XBP1 encodes a transcriptional activator protein that up-regulates expression of UPR target genes. Acts as an upstream signal for ER stress-induced GORASP2-mediated unconventional (ER/Golgi-independent) trafficking of CFTR to cell membrane by modulating the expression and localization of SEC16A. The sequence is that of Serine/threonine-protein kinase/endoribonuclease IRE1 from Mus musculus (Mouse).